Consider the following 60-residue polypeptide: Photosystem II reaction center protein L (60 aa).

A helical transmembrane segment spans residues 39–59 (SLYWGLLLIFVLAVLFSSYIF).

The protein belongs to the PsbL family. As to quaternary structure, PSII is composed of 1 copy each of membrane proteins PsbA, PsbB, PsbC, PsbD, PsbE, PsbF, PsbH, PsbI, PsbJ, PsbK, PsbL, PsbM, PsbT, PsbX, PsbY, PsbZ, Psb30/Ycf12, at least 3 peripheral proteins of the oxygen-evolving complex and a large number of cofactors. It forms dimeric complexes.

It is found in the plastid. The protein localises to the chloroplast thylakoid membrane. Functionally, one of the components of the core complex of photosystem II (PSII). PSII is a light-driven water:plastoquinone oxidoreductase that uses light energy to abstract electrons from H(2)O, generating O(2) and a proton gradient subsequently used for ATP formation. It consists of a core antenna complex that captures photons, and an electron transfer chain that converts photonic excitation into a charge separation. This subunit is found at the monomer-monomer interface and is required for correct PSII assembly and/or dimerization. The chain is Photosystem II reaction center protein L from Oedogonium cardiacum (Filamentous green alga).